The following is a 130-amino-acid chain: Large ribosomal subunit protein bL21 (130 aa).

The disordered stretch occupies residues Thr-110–Glu-130.

The protein belongs to the bacterial ribosomal protein bL21 family. In terms of assembly, part of the 50S ribosomal subunit. Contacts protein L20.

In terms of biological role, this protein binds to 23S rRNA in the presence of protein L20. This is Large ribosomal subunit protein bL21 from Nostoc sp. (strain PCC 7120 / SAG 25.82 / UTEX 2576).